We begin with the raw amino-acid sequence, 301 residues long: MRRTFIKKEGVVITTLARYLLGEKCGNRLKTIDELANECRSSVGLTQAALKTLESSGAIRIERRGRNGSYLVEMDNKALLTHVDINNVVCAMPLPYTRLYEGLASGLKAQFDGIPFYYAHMRGADIRVECLLNGVYDMAVVSRLAAESYLTQKGLCLALELGPHTYVGEHQLICRKGESANVKRVGLDNRSADQKIMTDVFFGGSDVERVDLSYHESLQRIVKGDVDAVIWNVVAENELTMLGLEATPLTDDPRFLQATEAVVLTRVDDYPMQQLLRAVVDKHALLAHQQRVVSGEQEPSY.

This is an uncharacterized protein from Escherichia coli (strain K12).